Here is a 1142-residue protein sequence, read N- to C-terminus: Nucleoporin nup131 (1142 aa).

It belongs to the nucleoporin Nup133 family. As to quaternary structure, component of the npc107-120 complex which consists of nup85, nup107, nup120, nup131, nup132 and seh1. Interacts with nup107.

It is found in the nucleus. Functions as a component of the nuclear pore complex (NPC). NPC components, collectively referred to as nucleoporins (NUPs), can play the role of both NPC structural components and of docking or interaction partners for transiently associated nuclear transport factors. Active directional transport is assured by both, a Phe-Gly (FG) repeat affinity gradient for these transport factors across the NPC and a transport cofactor concentration gradient across the nuclear envelope. The polypeptide is Nucleoporin nup131 (nup131) (Schizosaccharomyces pombe (strain 972 / ATCC 24843) (Fission yeast)).